A 559-amino-acid chain; its full sequence is Suppressor of tumorigenicity 7 protein-like (559 aa).

A run of 3 helical transmembrane segments spans residues 39–59 (GLANSGSTLWFLAGLGLLYAL), 83–103 (FYVALTGTSSLISGLIFIFEW), and 513–533 (LPFFIHFTAGLCSSTAMIALL).

It belongs to the ST7 family.

The protein localises to the membrane. The sequence is that of Suppressor of tumorigenicity 7 protein-like (St7l) from Rattus norvegicus (Rat).